We begin with the raw amino-acid sequence, 63 residues long: uncharacterized protein (63 aa).

A helical membrane pass occupies residues 38 to 58 (ISLFIILHLCLLVCLLLSFYF).

The protein resides in the membrane. This is an uncharacterized protein from Saccharomyces cerevisiae (strain ATCC 204508 / S288c) (Baker's yeast).